The sequence spans 213 residues: Holliday junction branch migration complex subunit RuvA (213 aa).

Residues 1 to 64 form a domain I region; the sequence is MIARLVGFLV…EDSITLFGFA (64 aa). Residues 65 to 143 are domain II; that stretch reads SYLERDWFRL…AIALFSSAKG (79 aa). A flexible linker region spans residues 144-159; it reads DHLAVEDISQPAASAH. The segment at 160-213 is domain III; sequence HAGNFMADAVSALLNLGFKPAEAQRVVQLASEELGDQATLDSLVRLALRLSSKH.

It belongs to the RuvA family. As to quaternary structure, homotetramer. Forms an RuvA(8)-RuvB(12)-Holliday junction (HJ) complex. HJ DNA is sandwiched between 2 RuvA tetramers; dsDNA enters through RuvA and exits via RuvB. An RuvB hexamer assembles on each DNA strand where it exits the tetramer. Each RuvB hexamer is contacted by two RuvA subunits (via domain III) on 2 adjacent RuvB subunits; this complex drives branch migration. In the full resolvosome a probable DNA-RuvA(4)-RuvB(12)-RuvC(2) complex forms which resolves the HJ.

It is found in the cytoplasm. The RuvA-RuvB-RuvC complex processes Holliday junction (HJ) DNA during genetic recombination and DNA repair, while the RuvA-RuvB complex plays an important role in the rescue of blocked DNA replication forks via replication fork reversal (RFR). RuvA specifically binds to HJ cruciform DNA, conferring on it an open structure. The RuvB hexamer acts as an ATP-dependent pump, pulling dsDNA into and through the RuvAB complex. HJ branch migration allows RuvC to scan DNA until it finds its consensus sequence, where it cleaves and resolves the cruciform DNA. The polypeptide is Holliday junction branch migration complex subunit RuvA (Zymomonas mobilis subsp. mobilis (strain ATCC 31821 / ZM4 / CP4)).